The chain runs to 187 residues: Small ribosomal subunit protein uS10m (187 aa).

The protein belongs to the universal ribosomal protein uS10 family. As to quaternary structure, component of the mitochondrial ribosome small subunit (28S) which comprises a 12S rRNA and about 30 distinct proteins.

Its subcellular location is the mitochondrion. The chain is Small ribosomal subunit protein uS10m (mrps10) from Danio rerio (Zebrafish).